The following is a 138-amino-acid chain: Large ribosomal subunit protein bL17 (138 aa).

Belongs to the bacterial ribosomal protein bL17 family. In terms of assembly, part of the 50S ribosomal subunit. Contacts protein L32.

This chain is Large ribosomal subunit protein bL17, found in Solidesulfovibrio magneticus (strain ATCC 700980 / DSM 13731 / RS-1) (Desulfovibrio magneticus).